A 695-amino-acid polypeptide reads, in one-letter code: Probable Rho-GTPase-activating protein 7 (695 aa).

The span at 1 to 11 (MLSAPSSSTTP) shows a compositional bias: low complexity. Positions 1 to 26 (MLSAPSSSTTPASPPTSPPNTTSSDD) are disordered. In terms of domain architecture, F-BAR spans 33–307 (PKVEAILNSE…ALDNINANTD (275 aa)). Positions 320–499 (EDNKNPTDAS…SVSPQPSSPT (180 aa)) are disordered. 2 stretches are compositionally biased toward polar residues: residues 336–348 (PPSSYGTGSSAGK) and 366–382 (PLQNTNPAPSTFPNPSV). Composition is skewed to low complexity over residues 383 to 432 (ASPA…RTSS), 458 to 467 (PIQTTTIQTS), and 488 to 499 (PTSVSPQPSSPT). Phosphoserine is present on residues Ser-496 and Ser-497. The Rho-GAP domain maps to 506–692 (ARLDAIILRE…ILIDYCFTIF (187 aa)).

The sequence is that of Probable Rho-GTPase-activating protein 7 (rga7) from Schizosaccharomyces pombe (strain 972 / ATCC 24843) (Fission yeast).